The primary structure comprises 131 residues: Small ribosomal subunit protein uS8 (131 aa).

The protein belongs to the universal ribosomal protein uS8 family. In terms of assembly, part of the 30S ribosomal subunit. Contacts proteins S5 and S12.

In terms of biological role, one of the primary rRNA binding proteins, it binds directly to 16S rRNA central domain where it helps coordinate assembly of the platform of the 30S subunit. The protein is Small ribosomal subunit protein uS8 of Ralstonia nicotianae (strain ATCC BAA-1114 / GMI1000) (Ralstonia solanacearum).